Consider the following 29-residue polypeptide: Cyclotide cter-K (29 aa).

The segment at residues 1–29 is a cross-link (cyclopeptide (His-Asn)); the sequence is HEPCGESCVFIPCITTVVGCSCKNKVCYN. Cystine bridges form between Cys4-Cys20, Cys8-Cys22, and Cys13-Cys27.

In terms of processing, contains 3 disulfide bonds. This is a cyclic peptide.

Probably participates in a plant defense mechanism. The sequence is that of Cyclotide cter-K from Clitoria ternatea (Butterfly pea).